An 898-amino-acid polypeptide reads, in one-letter code: Nitrate reductase [NAD(P)H] (898 aa).

Positions 1–15 (MAASVENRRFTHHEP) are enriched in basic and acidic residues. The segment at 1–65 (MAASVENRRF…SSSEDENEND (65 aa)) is disordered. Cysteine 180 contacts Mo-molybdopterin. The Cytochrome b5 heme-binding domain occupies 528–603 (SKMFSMSEVK…LEDYRIGELI (76 aa)). 2 residues coordinate heme: histidine 563 and histidine 586. The 113-residue stretch at 642-754 (GAKIPTKLVY…KGPLGHVEYT (113 aa)) folds into the FAD-binding FR-type domain. Residues 694-697 (RAYT), 711-715 (VVKIY), phenylalanine 716, phenylalanine 723, 728-730 (LMS), and threonine 781 each bind FAD.

It belongs to the nitrate reductase family. Homodimer. The cofactor is FAD. Heme serves as cofactor. It depends on Mo-molybdopterin as a cofactor.

The enzyme catalyses nitrite + NAD(+) + H2O = nitrate + NADH + H(+). It carries out the reaction nitrite + NADP(+) + H2O = nitrate + NADPH + H(+). Nitrate reductase is a key enzyme involved in the first step of nitrate assimilation in plants, fungi and bacteria. This is Nitrate reductase [NAD(P)H] (NIA1) from Betula pendula (European white birch).